The following is a 122-amino-acid chain: MIQPQTHLNVADNSGARELMCIRIIGASNHRYAHIGDVIVAVIKEAVPNMPLERSEVIRAVIVRTCKELKRDNGMIIRYDDNAAVVIDQEGNPKGTRVFGAIARELRQLNFTKIVSLAPEVL.

Belongs to the universal ribosomal protein uL14 family. As to quaternary structure, part of the 50S ribosomal subunit.

Its subcellular location is the plastid. It localises to the chloroplast. Functionally, binds to 23S rRNA. This Illicium oligandrum (Star anise) protein is Large ribosomal subunit protein uL14c.